Reading from the N-terminus, the 380-residue chain is Carbamoyl phosphate synthase small chain (380 aa).

Positions 1–187 (MTTSTRGAAK…VVPAIGAKRF (187 aa)) are CPSase. Residues serine 55, glycine 236, and glycine 238 each coordinate L-glutamine. Positions 188 to 380 (TVAAVDLGIK…FVSLMEGQRA (193 aa)) constitute a Glutamine amidotransferase type-1 domain. Cysteine 264 acts as the Nucleophile in catalysis. 5 residues coordinate L-glutamine: phenylalanine 265, glutamine 268, asparagine 306, glycine 308, and phenylalanine 309. Catalysis depends on residues histidine 354 and glutamate 356.

It belongs to the CarA family. In terms of assembly, composed of two chains; the small (or glutamine) chain promotes the hydrolysis of glutamine to ammonia, which is used by the large (or ammonia) chain to synthesize carbamoyl phosphate. Tetramer of heterodimers (alpha,beta)4.

The enzyme catalyses hydrogencarbonate + L-glutamine + 2 ATP + H2O = carbamoyl phosphate + L-glutamate + 2 ADP + phosphate + 2 H(+). It catalyses the reaction L-glutamine + H2O = L-glutamate + NH4(+). It functions in the pathway amino-acid biosynthesis; L-arginine biosynthesis; carbamoyl phosphate from bicarbonate: step 1/1. The protein operates within pyrimidine metabolism; UMP biosynthesis via de novo pathway; (S)-dihydroorotate from bicarbonate: step 1/3. Its function is as follows. Small subunit of the glutamine-dependent carbamoyl phosphate synthetase (CPSase). CPSase catalyzes the formation of carbamoyl phosphate from the ammonia moiety of glutamine, carbonate, and phosphate donated by ATP, constituting the first step of 2 biosynthetic pathways, one leading to arginine and/or urea and the other to pyrimidine nucleotides. The small subunit (glutamine amidotransferase) binds and cleaves glutamine to supply the large subunit with the substrate ammonia. The polypeptide is Carbamoyl phosphate synthase small chain (Streptomyces avermitilis (strain ATCC 31267 / DSM 46492 / JCM 5070 / NBRC 14893 / NCIMB 12804 / NRRL 8165 / MA-4680)).